The chain runs to 142 residues: Hemoglobin subunit alpha (142 aa).

The region spanning 2–142 (VLSPADKSNV…VSTVLTSKYR (141 aa)) is the Globin domain. S4 bears the Phosphoserine mark. Residues K8 and K12 each carry the N6-succinyllysine modification. Position 17 is an N6-acetyllysine; alternate (K17). N6-succinyllysine; alternate is present on K17. Y25 is subject to Phosphotyrosine. S36 is subject to Phosphoserine. Position 41 is an N6-succinyllysine (K41). S50 is subject to Phosphoserine. H59 is an O2 binding site. Heme b is bound at residue H88. S103 is subject to Phosphoserine. A Phosphothreonine modification is found at T109. 2 positions are modified to phosphoserine: S125 and S132. Phosphothreonine is present on residues T135 and T138. S139 carries the post-translational modification Phosphoserine.

Belongs to the globin family. As to quaternary structure, heterotetramer of two alpha chains and two beta chains. In terms of tissue distribution, red blood cells.

In terms of biological role, involved in oxygen transport from the lung to the various peripheral tissues. Hemopressin acts as an antagonist peptide of the cannabinoid receptor CNR1. Hemopressin-binding efficiently blocks cannabinoid receptor CNR1 and subsequent signaling. In Ateles geoffroyi (Black-handed spider monkey), this protein is Hemoglobin subunit alpha (HBA).